An 811-amino-acid chain; its full sequence is Glycerol-3-phosphate acyltransferase (811 aa).

Residues 309–314 carry the HXXXXD motif motif; that stretch reads CHRSHM.

It belongs to the GPAT/DAPAT family.

The protein resides in the cell inner membrane. The catalysed reaction is sn-glycerol 3-phosphate + an acyl-CoA = a 1-acyl-sn-glycero-3-phosphate + CoA. The protein operates within phospholipid metabolism; CDP-diacylglycerol biosynthesis; CDP-diacylglycerol from sn-glycerol 3-phosphate: step 1/3. The sequence is that of Glycerol-3-phosphate acyltransferase from Colwellia psychrerythraea (strain 34H / ATCC BAA-681) (Vibrio psychroerythus).